The following is a 273-amino-acid chain: Dermonecrotic toxin LarSicTox-alphaVII1 (273 aa).

His5 is a catalytic residue. Mg(2+) is bound by residues Glu25 and Asp27. Residue His41 is the Nucleophile of the active site. Cystine bridges form between Cys45–Cys51 and Cys47–Cys192. A Mg(2+)-binding site is contributed by Asp85.

This sequence belongs to the arthropod phospholipase D family. Class II subfamily. Mg(2+) is required as a cofactor. In terms of tissue distribution, expressed by the venom gland.

It is found in the secreted. The enzyme catalyses an N-(acyl)-sphingosylphosphocholine = an N-(acyl)-sphingosyl-1,3-cyclic phosphate + choline. The catalysed reaction is an N-(acyl)-sphingosylphosphoethanolamine = an N-(acyl)-sphingosyl-1,3-cyclic phosphate + ethanolamine. It catalyses the reaction a 1-acyl-sn-glycero-3-phosphocholine = a 1-acyl-sn-glycero-2,3-cyclic phosphate + choline. It carries out the reaction a 1-acyl-sn-glycero-3-phosphoethanolamine = a 1-acyl-sn-glycero-2,3-cyclic phosphate + ethanolamine. In terms of biological role, dermonecrotic toxins cleave the phosphodiester linkage between the phosphate and headgroup of certain phospholipids (sphingolipid and lysolipid substrates), forming an alcohol (often choline) and a cyclic phosphate. This toxin acts on sphingomyelin (SM). It may also act on ceramide phosphoethanolamine (CPE), lysophosphatidylcholine (LPC) and lysophosphatidylethanolamine (LPE), but not on lysophosphatidylserine (LPS), and lysophosphatidylglycerol (LPG). It acts by transphosphatidylation, releasing exclusively cyclic phosphate products as second products. Induces dermonecrosis, hemolysis, increased vascular permeability, edema, inflammatory response, and platelet aggregation. In Loxosceles arizonica (Arizona brown spider), this protein is Dermonecrotic toxin LarSicTox-alphaVII1.